A 362-amino-acid chain; its full sequence is Ferrochelatase (362 aa).

Histidine 228 and glutamate 309 together coordinate Fe cation.

Belongs to the ferrochelatase family.

Its subcellular location is the cytoplasm. It carries out the reaction heme b + 2 H(+) = protoporphyrin IX + Fe(2+). It participates in porphyrin-containing compound metabolism; protoheme biosynthesis; protoheme from protoporphyrin-IX: step 1/1. Catalyzes the ferrous insertion into protoporphyrin IX. The polypeptide is Ferrochelatase (Bordetella pertussis (strain Tohama I / ATCC BAA-589 / NCTC 13251)).